The sequence spans 233 residues: C-type lectin domain family 2 member D2 (233 aa).

The segment at 1–34 (MPSSAHLQDAPPLLSRTLTQDEEQTSLRQSSSCG) is disordered. The Cytoplasmic segment spans residues 1-76 (MPSSAHLQDA…SPESPAKLPC (76 aa)). The chain crosses the membrane as a helical; Signal-anchor for type II membrane protein span at residues 77 to 97 (CYGVIMVLSVAVVALSVALSV). The Extracellular portion of the chain corresponds to 98-233 (KKTPQILTVK…KPNSYTSQCQ (136 aa)). Positions 119–228 (VGNKCYYFNE…KSICSKPNSY (110 aa)) constitute a C-type lectin domain. A glycan (N-linked (GlcNAc...) asparagine) is linked at N132.

The protein resides in the cell membrane. Lectin-type cell surface receptor. The chain is C-type lectin domain family 2 member D2 (Clec2d2) from Rattus norvegicus (Rat).